Reading from the N-terminus, the 305-residue chain is Protoheme IX farnesyltransferase (305 aa).

The next 9 helical transmembrane spans lie at 26 to 46, 47 to 67, 98 to 118, 119 to 139, 147 to 167, 174 to 194, 220 to 240, 243 to 263, and 284 to 304; these read VMSL…QPVN, PFVA…SGAL, LAVG…AANW, FAAG…TIWL, IVIG…CATG, LLMF…LALF, IFAY…TSVG, LYLA…WQIL, and LSLY…WVGG.

This sequence belongs to the UbiA prenyltransferase family. Protoheme IX farnesyltransferase subfamily. As to quaternary structure, interacts with CtaA.

The protein resides in the cell inner membrane. It catalyses the reaction heme b + (2E,6E)-farnesyl diphosphate + H2O = Fe(II)-heme o + diphosphate. Its pathway is porphyrin-containing compound metabolism; heme O biosynthesis; heme O from protoheme: step 1/1. Functionally, converts heme B (protoheme IX) to heme O by substitution of the vinyl group on carbon 2 of heme B porphyrin ring with a hydroxyethyl farnesyl side group. In Paracoccus denitrificans (strain Pd 1222), this protein is Protoheme IX farnesyltransferase.